The chain runs to 430 residues: Dihydroorotase (430 aa).

2 residues coordinate Zn(2+): His-57 and His-59. Residues 59–61 (HLR) and Asn-91 contribute to the substrate site. Zn(2+) is bound by residues Asp-151, His-178, and His-231. Asn-277 contributes to the substrate binding site. Asp-304 contributes to the Zn(2+) binding site. The active site involves Asp-304. Residues His-308 and 322 to 323 (PG) each bind substrate.

It belongs to the metallo-dependent hydrolases superfamily. DHOase family. Class I DHOase subfamily. It depends on Zn(2+) as a cofactor.

The enzyme catalyses (S)-dihydroorotate + H2O = N-carbamoyl-L-aspartate + H(+). The protein operates within pyrimidine metabolism; UMP biosynthesis via de novo pathway; (S)-dihydroorotate from bicarbonate: step 3/3. In terms of biological role, catalyzes the reversible cyclization of carbamoyl aspartate to dihydroorotate. The protein is Dihydroorotase of Mycobacterium tuberculosis (strain ATCC 25618 / H37Rv).